The following is a 239-amino-acid chain: DNA damage-regulated autophagy modulator protein 1 (239 aa).

A run of 6 helical transmembrane segments spans residues 15-35 (ILVI…VLIG), 54-74 (SGVF…TMYT), 91-111 (IYFN…MGIV), 119-139 (VPAV…MYIL), 162-182 (MTVS…SILS), and 201-221 (TSAI…LTFI).

Belongs to the DRAM/TMEM150 family.

Its subcellular location is the lysosome membrane. In terms of biological role, lysosomal modulator of autophagy that plays a central role in p53/TP53-mediated apoptosis. This chain is DNA damage-regulated autophagy modulator protein 1 (dram1), found in Xenopus laevis (African clawed frog).